Reading from the N-terminus, the 396-residue chain is MLDAQTIATVKATIPLLVETGPKLTAHFYDRMFTHNPELKEIFNMSNQRNGDQREALFNAIAAYASNIENLPALLPAVEKIAQKHTSFQIKPEQYNIVGTHLLATLDEMFNPGQEVLDAWGKAYGVLANVFIHREAEIYHENASKDGGWEGTRPFRIVAKTPRSALITSFEFEPVDGGTVAEYRPGQYLGVWLKPEGFAHQEIRQYSLTRKPDGKGYRIAVKREDGGQVSNWLHHHASVGDGVHLAAPAGDFFMNVAADTPVSLISAGVGQTPMLAMLDTLAKEQHTAQVNWFHAAENGDVHAFADEVSELGRTLPRFTAHTWYREPTESDRAQRLFDSEGLMDLSKLEAAISDPAMQFYLCGPVGFMQFAAKQLVSLGVNNENIHYECFGPHKVL.

A Globin domain is found at 1 to 136 (MLDAQTIATV…LANVFIHREA (136 aa)). Position 85 (His85) interacts with heme b. Catalysis depends on charge relay system residues Tyr95 and Glu135. The interval 147 to 396 (GGWEGTRPFR…YECFGPHKVL (250 aa)) is reductase. The FAD-binding FR-type domain maps to 150 to 255 (EGTRPFRIVA…AAPAGDFFMN (106 aa)). FAD is bound by residues Tyr188 and 204–207 (RQYS). 268–273 (GVGQTP) serves as a coordination point for NADP(+). 389 to 392 (CFGP) is a binding site for FAD.

Belongs to the globin family. Two-domain flavohemoproteins subfamily. It in the C-terminal section; belongs to the flavoprotein pyridine nucleotide cytochrome reductase family. As to quaternary structure, monomer. Heme b is required as a cofactor. The cofactor is FAD.

It carries out the reaction 2 nitric oxide + NADPH + 2 O2 = 2 nitrate + NADP(+) + H(+). It catalyses the reaction 2 nitric oxide + NADH + 2 O2 = 2 nitrate + NAD(+) + H(+). In terms of biological role, is involved in NO detoxification in an aerobic process, termed nitric oxide dioxygenase (NOD) reaction that utilizes O(2) and NAD(P)H to convert NO to nitrate, which protects the bacterium from various noxious nitrogen compounds. Therefore, plays a central role in the inducible response to nitrosative stress. This chain is Flavohemoprotein (hmp), found in Salmonella typhimurium (strain LT2 / SGSC1412 / ATCC 700720).